We begin with the raw amino-acid sequence, 226 residues long: 7-cyano-7-deazaguanine synthase (226 aa).

10–20 (LSGGLDSATAA) serves as a coordination point for ATP. Zn(2+)-binding residues include Cys-191, Cys-199, Cys-202, and Cys-205.

It belongs to the QueC family. It depends on Zn(2+) as a cofactor.

The catalysed reaction is 7-carboxy-7-deazaguanine + NH4(+) + ATP = 7-cyano-7-deazaguanine + ADP + phosphate + H2O + H(+). Its pathway is purine metabolism; 7-cyano-7-deazaguanine biosynthesis. Catalyzes the ATP-dependent conversion of 7-carboxy-7-deazaguanine (CDG) to 7-cyano-7-deazaguanine (preQ(0)). In Synechococcus sp. (strain CC9902), this protein is 7-cyano-7-deazaguanine synthase.